Here is a 116-residue protein sequence, read N- to C-terminus: Ribonuclease P protein component (116 aa).

Belongs to the RnpA family. As to quaternary structure, consists of a catalytic RNA component (M1 or rnpB) and a protein subunit.

The enzyme catalyses Endonucleolytic cleavage of RNA, removing 5'-extranucleotides from tRNA precursor.. In terms of biological role, RNaseP catalyzes the removal of the 5'-leader sequence from pre-tRNA to produce the mature 5'-terminus. It can also cleave other RNA substrates such as 4.5S RNA. The protein component plays an auxiliary but essential role in vivo by binding to the 5'-leader sequence and broadening the substrate specificity of the ribozyme. This Leuconostoc citreum (strain KM20) protein is Ribonuclease P protein component.